A 675-amino-acid chain; its full sequence is DNA ligase (675 aa).

NAD(+) contacts are provided by residues Asp33–Asp37, Ser82–Leu83, and Glu114. Lys116 functions as the N6-AMP-lysine intermediate in the catalytic mechanism. NAD(+)-binding residues include Arg137, Glu174, Lys291, and Lys315. The Zn(2+) site is built by Cys409, Cys412, Cys427, and Cys433. In terms of domain architecture, BRCT spans Ala595 to Lys675.

Belongs to the NAD-dependent DNA ligase family. LigA subfamily. Mg(2+) is required as a cofactor. Mn(2+) serves as cofactor.

It catalyses the reaction NAD(+) + (deoxyribonucleotide)n-3'-hydroxyl + 5'-phospho-(deoxyribonucleotide)m = (deoxyribonucleotide)n+m + AMP + beta-nicotinamide D-nucleotide.. DNA ligase that catalyzes the formation of phosphodiester linkages between 5'-phosphoryl and 3'-hydroxyl groups in double-stranded DNA using NAD as a coenzyme and as the energy source for the reaction. It is essential for DNA replication and repair of damaged DNA. The sequence is that of DNA ligase from Proteus mirabilis (strain HI4320).